A 25-amino-acid chain; its full sequence is Small ribosomal subunit protein eS32 eS32z/eS32y/eS32x/eS32w/eS32v (25 aa).

A disordered region spans residues 1–25 (MRAKWKKKRMRRLKRKRRKMRQRSK).

It belongs to the eukaryotic ribosomal protein eS32 family. In terms of assembly, component of the small ribosomal subunit (SSU).

In Arabidopsis thaliana (Mouse-ear cress), this protein is Small ribosomal subunit protein eS32 eS32z/eS32y/eS32x/eS32w/eS32v (RPL41A).